We begin with the raw amino-acid sequence, 439 residues long: Tol-Pal system protein TolB (439 aa).

Positions 1-22 are cleaved as a signal peptide; the sequence is MKKPLRWLAALTVLLLPLSALA.

The protein belongs to the TolB family. The Tol-Pal system is composed of five core proteins: the inner membrane proteins TolA, TolQ and TolR, the periplasmic protein TolB and the outer membrane protein Pal. They form a network linking the inner and outer membranes and the peptidoglycan layer.

The protein localises to the periplasm. Functionally, part of the Tol-Pal system, which plays a role in outer membrane invagination during cell division and is important for maintaining outer membrane integrity. The chain is Tol-Pal system protein TolB from Xanthomonas oryzae pv. oryzae (strain PXO99A).